The chain runs to 171 residues: LIM domain transcription factor LMO4-A (171 aa).

A compositionally biased stretch (polar residues) spans 1-19 (MVNNRSSESTTTAVSSNGS). The disordered stretch occupies residues 1–21 (MVNNRSSESTTTAVSSNGSPP). 2 LIM zinc-binding domains span residues 22–84 (KACA…LFGN) and 86–148 (GACN…GLLN).

In terms of tissue distribution, at the start of gastrulation (stage 10), expressed in the mesodermal marginal zone. Shortly after (stage 11), expression is down-regulated in the dorsal most region. During neurulation, expressed in the neural plate and ventral epidermis. At late neurula stages, also expressed more rostrally, and then in the brain, migrating neural crests and ventral epidermis.

In terms of biological role, acts as a positive cofactor of GATA transcription factors to establish the identity of the ventral mesoderm during gastrulation. Down-regulation in the dorsal mesoderm is necessary for the proper formation of this territory since, when present, lmo4 may bind ldb1 and restrict the availability of this cofactor for Spemman organizer transcription factors. At neurula stages, suppresses primary neuron differentiation and modulates gene expression at the Isthmic Organizer of the midbrain-hindbrain boundary. The polypeptide is LIM domain transcription factor LMO4-A (lmo4-a) (Xenopus laevis (African clawed frog)).